The sequence spans 323 residues: uncharacterized protein (323 aa).

The protein belongs to the glycosyltransferase 2 family.

This is an uncharacterized protein from Haemophilus influenzae (strain ATCC 51907 / DSM 11121 / KW20 / Rd).